Here is a 398-residue protein sequence, read N- to C-terminus: Phosphoglycerate kinase (398 aa).

Residues 21–23 (DFN), arginine 36, 59–62 (HLGR), arginine 119, and arginine 157 contribute to the substrate site. ATP-binding positions include lysine 208, glycine 296, glutamate 327, and 354–357 (GGDS).

It belongs to the phosphoglycerate kinase family. Monomer.

It is found in the cytoplasm. It carries out the reaction (2R)-3-phosphoglycerate + ATP = (2R)-3-phospho-glyceroyl phosphate + ADP. It participates in carbohydrate degradation; glycolysis; pyruvate from D-glyceraldehyde 3-phosphate: step 2/5. The polypeptide is Phosphoglycerate kinase (Lactococcus lactis subsp. cremoris (strain SK11)).